The following is a 610-amino-acid chain: E3 ubiquitin-protein ligase hrd-1 (610 aa).

A signal peptide spans 1-23; it reads MRVSAGLMIGGSCVATAATILNA. Topologically, residues 24–41 are lumenal; sequence FLINKQFYPSIVYLSKSN. A helical transmembrane segment spans residues 42-62; that stretch reads ASMAVIYVQGIVLVYLMFQLL. Over 63–99 the chain is Cytoplasmic; sequence KSILFGDLRAAEAEHLSERTWHAVLETCLAFTVFRDD. A helical transmembrane segment spans residues 100 to 120; that stretch reads FSAIFVMQFIGLLFIKCFHWL. The Lumenal segment spans residues 121-144; the sequence is ADDRVDMMERSPVITLRFHLRMMT. The chain crosses the membrane as a helical span at residues 145–165; the sequence is VLAALGFADSYFVSSAYFTTI. The Cytoplasmic segment spans residues 166–170; it reads TRGAS. A helical transmembrane segment spans residues 171 to 191; it reads AQIVFGFEYAILLALVLHVTI. The Lumenal segment spans residues 192-215; sequence KYLLHMHDLRNPQSWDNKAVYLLY. A helical membrane pass occupies residues 216-236; it reads AELFINLIRCLLYGFFAVVML. The Cytoplasmic segment spans residues 237–610; sequence RVHTFPLFSV…ARLLGENANQ (374 aa). An RING-type; atypical zinc finger spans residues 292 to 333; sequence CIICREEMTVDASPKRLPCSHVFHAHCLRSWFQRQQTCPTCR. Disordered regions lie at residues 386–408, 452–480, and 521–610; these read QPAGAGGAQPGAAQAGGQPGPFP, VNTTQGTSSETPPVNPSYSQLSTEELRRM, and RPVV…NANQ. Positions 452 to 474 are enriched in polar residues; that stretch reads VNTTQGTSSETPPVNPSYSQLST. Over residues 560-589 the composition is skewed to low complexity; the sequence is TESPSTSSTAPSTSSPVTASSTPTTSSTRT.

It belongs to the HRD1 family. In terms of assembly, homodimer.

It localises to the endoplasmic reticulum membrane. It catalyses the reaction S-ubiquitinyl-[E2 ubiquitin-conjugating enzyme]-L-cysteine + [acceptor protein]-L-lysine = [E2 ubiquitin-conjugating enzyme]-L-cysteine + N(6)-ubiquitinyl-[acceptor protein]-L-lysine.. Its pathway is protein modification; protein ubiquitination. Acts as an E3 ubiquitin-protein ligase which accepts ubiquitin specifically from endoplasmic reticulum-associated ubc-7 E2 ligase and transfers it to substrates, promoting their degradation. Component of the endoplasmic reticulum quality control (ERQC) system, which is also called the ER-associated degradation (ERAD) system, involved in ubiquitin-dependent degradation of misfolded endoplasmic reticulum proteins. Also promotes the degradation of normal but naturally short-lived proteins. Protects cells from ER stress-induced apoptosis. Thought to play a role together with hsp-3 in developmental growth and function of intestinal cells and to play a role together with hsp-4 in gonad formation. Plays a key role in the degradation of the potassium channel slo-1, perhaps acting directly, in targeting slo-1 to the ER-associated degradation pathway (ERAD), and also indirectly, via activation of the transcription factor skn-1, which mediates proteasomal homeostasis. In Caenorhabditis elegans, this protein is E3 ubiquitin-protein ligase hrd-1 (sel-11).